Consider the following 313-residue polypeptide: MSGIDPKRFGKVAVLFGGESAEREVSLTSGRLVLQGLRDAGIDAHPFDPAERPLSALKDEGFVRAFNALHGGYGENGQIQGALDFYGIRYTGSGVLGSALGLDKFRTKLVWQQTGVPTPPFETVMRGDDYAARATDIVAKLGLPLFVKPASEGSSVAVLKVKTADALPAALSEAATHDKIVIVEKSIEGGGEYTACIAGDLDLPLIKIVPAGEFYDYHAKYVANDTQYLIPCGLPAEQETELKRIARRAFDVLGCTDWGRADFMLDAAGNAYFLEVNTAPGMTDHSLPPKAARSIGIGYSELVVKVLSLTLND.

The ATP-grasp domain occupies 108 to 308 (KLVWQQTGVP…YSELVVKVLS (201 aa)). 138 to 193 (VAKLGLPLFVKPASEGSSVAVLKVKTADALPAALSEAATHDKIVIVEKSIEGGGEY) is an ATP binding site. Mg(2+)-binding residues include D262, E275, and N277.

Belongs to the D-alanine--D-alanine ligase family. The cofactor is Mg(2+). Mn(2+) serves as cofactor.

The protein resides in the cytoplasm. It catalyses the reaction 2 D-alanine + ATP = D-alanyl-D-alanine + ADP + phosphate + H(+). The protein operates within cell wall biogenesis; peptidoglycan biosynthesis. Its function is as follows. Cell wall formation. This chain is D-alanine--D-alanine ligase, found in Burkholderia ambifaria (strain MC40-6).